The primary structure comprises 679 residues: Sodium-dependent phosphate transporter 1 (679 aa).

6 helical membrane-spanning segments follow: residues 21 to 41 (YLWM…SVGA), 62 to 82 (ACIL…AKVS), 100 to 120 (GLLM…QLVA), 158 to 178 (IVMS…ILFF), 203 to 223 (ACTV…LLGF), and 230 to 250 (GTIL…WFFV). A phosphoserine mark is found at serine 265 and serine 269. 4 consecutive transmembrane segments (helical) span residues 511 to 531 (VSLL…FAHG), 558 to 578 (VATP…GLWV), 600 to 620 (FSIE…GLPI), and 650 to 670 (IFMA…AIMA). Positions 550-558 (DTGDVSSKV) are a.

This sequence belongs to the inorganic phosphate transporter (PiT) (TC 2.A.20) family. In terms of tissue distribution, ubiquitously expressed.

The protein resides in the cell membrane. The enzyme catalyses 2 Na(+)(out) + phosphate(out) = 2 Na(+)(in) + phosphate(in). Its function is as follows. Sodium-phosphate symporter which preferentially transports the monovalent form of phosphate with a stoichiometry of two sodium ions per phosphate ion. May play a role in extracellular matrix and cartilage calcification as well as in vascular calcification. Essential for cell proliferation but this function is independent of its phosphate transporter activity. In terms of biological role, (Microbial infection) May function as a retroviral receptor as it confers human cells susceptibility to infection to Gibbon Ape Leukemia Virus (GaLV), Simian sarcoma-associated virus (SSAV) and Feline leukemia virus subgroup B (FeLV-B) as well as 10A1 murine leukemia virus (10A1 MLV). In Homo sapiens (Human), this protein is Sodium-dependent phosphate transporter 1 (SLC20A1).